Consider the following 292-residue polypeptide: uncharacterized protein (292 aa).

Disordered regions lie at residues 29-50 and 166-292; these read SEKPVGAPPASQIPGLSDLRDS and VKRK…EELK. At Ser50 the chain carries Phosphoserine. Polar residues-rich tracts occupy residues 176-189 and 208-217; these read NSKNSSKAGTPVNN and GSPTNFSKLI. Residues 221 to 239 show a composition bias toward basic and acidic residues; sequence YKDEWLQQQKADSDRRTPK. Composition is skewed to polar residues over residues 240–250 and 260–270; these read TSEASVSTQST and DTETPQNSETP.

In terms of processing, phosphorylated upon DNA damage.

This is an uncharacterized protein from Rattus norvegicus (Rat).